The primary structure comprises 268 residues: 26S proteasome regulatory subunit RPN10 (268 aa).

Residues 5 to 190 (ATVLVIDNSE…LYENIASSPI (186 aa)) enclose the VWFA domain. The 20-residue stretch at 223–242 (SMDPELAMALRLSMEEEQQR) folds into the UIM domain. Positions 226–268 (PELAMALRLSMEEEQQRQERLRQQQQQQDQPEQSEQPEQHQDK) are disordered. Basic and acidic residues predominate over residues 235–247 (SMEEEQQRQERLR). Residues 248-261 (QQQQQQDQPEQSEQ) are compositionally biased toward low complexity.

Belongs to the proteasome subunit S5A family. The 26S proteasome is composed of a core protease, known as the 20S proteasome, capped at one or both ends by the 19S regulatory complex (RC). The RC is composed of at least 18 different subunits in two subcomplexes, the base and the lid, which form the portions proximal and distal to the 20S proteolytic core, respectively. In terms of processing, ubiquitinated, leading to its degradation. Ubiquitination is promoted by HUL5.

In terms of biological role, multiubiquitin binding protein. The chain is 26S proteasome regulatory subunit RPN10 (RPN10) from Saccharomyces cerevisiae (strain ATCC 204508 / S288c) (Baker's yeast).